The primary structure comprises 256 residues: Imidazole glycerol phosphate synthase subunit HisF (256 aa).

Residues D12 and D131 contribute to the active site.

This sequence belongs to the HisA/HisF family. As to quaternary structure, heterodimer of HisH and HisF.

The protein localises to the cytoplasm. The enzyme catalyses 5-[(5-phospho-1-deoxy-D-ribulos-1-ylimino)methylamino]-1-(5-phospho-beta-D-ribosyl)imidazole-4-carboxamide + L-glutamine = D-erythro-1-(imidazol-4-yl)glycerol 3-phosphate + 5-amino-1-(5-phospho-beta-D-ribosyl)imidazole-4-carboxamide + L-glutamate + H(+). It functions in the pathway amino-acid biosynthesis; L-histidine biosynthesis; L-histidine from 5-phospho-alpha-D-ribose 1-diphosphate: step 5/9. Its function is as follows. IGPS catalyzes the conversion of PRFAR and glutamine to IGP, AICAR and glutamate. The HisF subunit catalyzes the cyclization activity that produces IGP and AICAR from PRFAR using the ammonia provided by the HisH subunit. The protein is Imidazole glycerol phosphate synthase subunit HisF of Beutenbergia cavernae (strain ATCC BAA-8 / DSM 12333 / CCUG 43141 / JCM 11478 / NBRC 16432 / NCIMB 13614 / HKI 0122).